The sequence spans 125 residues: Holo-[acyl-carrier-protein] synthase (125 aa).

D7 and E56 together coordinate Mg(2+).

Belongs to the P-Pant transferase superfamily. AcpS family. Mg(2+) is required as a cofactor.

Its subcellular location is the cytoplasm. The enzyme catalyses apo-[ACP] + CoA = holo-[ACP] + adenosine 3',5'-bisphosphate + H(+). Functionally, transfers the 4'-phosphopantetheine moiety from coenzyme A to a Ser of acyl-carrier-protein. This Chlamydia muridarum (strain MoPn / Nigg) protein is Holo-[acyl-carrier-protein] synthase.